A 434-amino-acid polypeptide reads, in one-letter code: Angio-associated migratory cell protein (434 aa).

The tract at residues Met1–Glu63 is disordered. Ser20 bears the Phosphoserine mark. Residues Asp39–Glu62 show a composition bias toward acidic residues. WD repeat units lie at residues Leu89 to Glu129, Gly132 to Ser171, Glu173 to Gln212, Pro214 to Lys254, Gly258 to Arg299, Ser315 to Gln354, Gln356 to Asp395, and Gly398 to Asp433.

It is found in the cell membrane. The protein resides in the cytoplasm. In terms of biological role, plays a role in angiogenesis and cell migration. In smooth muscle cell migration, may act through the RhoA pathway. In Pongo abelii (Sumatran orangutan), this protein is Angio-associated migratory cell protein (AAMP).